Here is a 131-residue protein sequence, read N- to C-terminus: Fatty acid-binding protein (131 aa).

(5Z,8Z,11Z,14Z)-eicosatetraenoate is bound by residues Arg-106 and 126–128 (RFY). (9Z)-octadecenoate-binding positions include Arg-106 and 126 to 128 (RFY).

This sequence belongs to the calycin superfamily. Fatty-acid binding protein (FABP) family.

It localises to the cytoplasm. Functionally, FABPs are thought to play a role in the intracellular transport of long-chain fatty acids and their acyl-CoA esters. In Tyrophagus putrescentiae (Mold mite), this protein is Fatty acid-binding protein.